Consider the following 331-residue polypeptide: L-lactate dehydrogenase A chain (331 aa).

NAD(+) is bound by residues 29-57 (GMVG…MEDK) and Arg98. Residues Arg105, Asn137, and Arg168 each coordinate substrate. Residue Asn137 participates in NAD(+) binding. The active-site Proton acceptor is His192. Thr247 is a binding site for substrate.

The protein belongs to the LDH/MDH superfamily. LDH family. Homotetramer.

The protein resides in the cytoplasm. It catalyses the reaction (S)-lactate + NAD(+) = pyruvate + NADH + H(+). Its pathway is fermentation; pyruvate fermentation to lactate; (S)-lactate from pyruvate: step 1/1. Its function is as follows. Interconverts simultaneously and stereospecifically pyruvate and lactate with concomitant interconversion of NADH and NAD(+). The chain is L-lactate dehydrogenase A chain (ldha) from Chaenocephalus aceratus (Blackfin icefish).